Consider the following 417-residue polypeptide: UDP-N-acetylglucosamine 1-carboxyvinyltransferase (417 aa).

22–23 (KN) is a binding site for phosphoenolpyruvate. Arg93 contacts UDP-N-acetyl-alpha-D-glucosamine. Cys117 serves as the catalytic Proton donor. Cys117 is modified (2-(S-cysteinyl)pyruvic acid O-phosphothioketal). Residues 122 to 126 (RPVDQ), Asp304, and Ile326 each bind UDP-N-acetyl-alpha-D-glucosamine.

It belongs to the EPSP synthase family. MurA subfamily.

It is found in the cytoplasm. The catalysed reaction is phosphoenolpyruvate + UDP-N-acetyl-alpha-D-glucosamine = UDP-N-acetyl-3-O-(1-carboxyvinyl)-alpha-D-glucosamine + phosphate. Its pathway is cell wall biogenesis; peptidoglycan biosynthesis. Cell wall formation. Adds enolpyruvyl to UDP-N-acetylglucosamine. The polypeptide is UDP-N-acetylglucosamine 1-carboxyvinyltransferase (Neisseria meningitidis serogroup C (strain 053442)).